The chain runs to 138 residues: Small ribosomal subunit protein uS12 (138 aa).

A disordered region spans residues 33–55 (KEHTNVSSPQKRGVCTRVGTMTP). A 3-methylthioaspartic acid modification is found at Asp102.

It belongs to the universal ribosomal protein uS12 family. In terms of assembly, part of the 30S ribosomal subunit. Contacts proteins S8 and S17. May interact with IF1 in the 30S initiation complex.

In terms of biological role, with S4 and S5 plays an important role in translational accuracy. Its function is as follows. Interacts with and stabilizes bases of the 16S rRNA that are involved in tRNA selection in the A site and with the mRNA backbone. Located at the interface of the 30S and 50S subunits, it traverses the body of the 30S subunit contacting proteins on the other side and probably holding the rRNA structure together. The combined cluster of proteins S8, S12 and S17 appears to hold together the shoulder and platform of the 30S subunit. In Bacillus velezensis (strain DSM 23117 / BGSC 10A6 / LMG 26770 / FZB42) (Bacillus amyloliquefaciens subsp. plantarum), this protein is Small ribosomal subunit protein uS12.